The primary structure comprises 337 residues: Glyceraldehyde-3-phosphate dehydrogenase (337 aa).

Residues R12–I13, D34, and K79 each bind NAD(+). D-glyceraldehyde 3-phosphate is bound by residues S150–T152, T181, T210–G211, and R233. The active-site Nucleophile is the C151. Position 315 (N315) interacts with NAD(+).

The protein belongs to the glyceraldehyde-3-phosphate dehydrogenase family. In terms of assembly, homotetramer.

The protein resides in the cytoplasm. The enzyme catalyses D-glyceraldehyde 3-phosphate + phosphate + NAD(+) = (2R)-3-phospho-glyceroyl phosphate + NADH + H(+). The protein operates within carbohydrate degradation; glycolysis; pyruvate from D-glyceraldehyde 3-phosphate: step 1/5. This chain is Glyceraldehyde-3-phosphate dehydrogenase (GPD), found in Cochliobolus lunatus (Filamentous fungus).